The primary structure comprises 484 residues: Folate synthesis bifunctional protein (484 aa).

An HPPK region spans residues Val-15–Leu-141. A Pterin-binding domain is found at Thr-202 to Arg-470. Residues Val-204–Asp-484 are DHPS. Asn-209 is a binding site for Mg(2+). (7,8-dihydropterin-6-yl)methyl diphosphate is bound by residues Thr-249, Asp-286, Asn-305, Asp-378, Lys-423, and Arg-458–His-460.

It in the N-terminal section; belongs to the HPPK family. In the C-terminal section; belongs to the DHPS family. It depends on Mg(2+) as a cofactor. Expressed exclusively in reproductive tissues.

The protein resides in the cytoplasm. The protein localises to the cytosol. It carries out the reaction 6-hydroxymethyl-7,8-dihydropterin + ATP = (7,8-dihydropterin-6-yl)methyl diphosphate + AMP + H(+). It catalyses the reaction (7,8-dihydropterin-6-yl)methyl diphosphate + 4-aminobenzoate = 7,8-dihydropteroate + diphosphate. The protein operates within cofactor biosynthesis; tetrahydrofolate biosynthesis; 2-amino-4-hydroxy-6-hydroxymethyl-7,8-dihydropteridine diphosphate from 7,8-dihydroneopterin triphosphate: step 4/4. Its pathway is cofactor biosynthesis; tetrahydrofolate biosynthesis; 7,8-dihydrofolate from 2-amino-4-hydroxy-6-hydroxymethyl-7,8-dihydropteridine diphosphate and 4-aminobenzoate: step 1/2. Its activity is regulated as follows. Inhibited by sulfanilamide. Catalyzes the first two consecutive steps of tetrahydrofolate biosynthesis. Plays a role in seed stress response and survival. This Arabidopsis thaliana (Mouse-ear cress) protein is Folate synthesis bifunctional protein.